The sequence spans 432 residues: MVVTTLNTTKSEEIFAAAQKLMPGGVSSPVRAFKSVGGQPIVFDRVQGAYIWDVDGNQYIDYVGTWGPAICGHAHPEVLNGLKEVLEKGTSFGAPCALENTLAKMVIDAVPSIEMIRFVNSGTEACMAVLRLMRAFTGRDKVIKFEGCYHGHADMFLVKAGSGVATLGLPDSPGVPKHVTKNTLTAPYNDLETVKKLFEENPDQISGVILEPVVGNSGFIVPDAGFLEGLRMITKENGALLVFDEVMTGFRIAYGGAQEKFNVTPDLTTLGKIIGGGLPVGAYGGRQDIMSMVAPAGPMYQAGTLSGNPLAMTAGIKTLELLKKPGTYDQLNKITKRLADGLLNIAKETNNDIWGGHISAMFGIFFNKGPVHNYDDAKKSDLTKFSKFHRGMLEHGIYLAPSQFEAGFTSLAHTEEDIDRTLATAKKVMSSL.

Lys272 is subject to N6-(pyridoxal phosphate)lysine.

It belongs to the class-III pyridoxal-phosphate-dependent aminotransferase family. HemL subfamily. Homodimer. Pyridoxal 5'-phosphate serves as cofactor.

Its subcellular location is the cytoplasm. The catalysed reaction is (S)-4-amino-5-oxopentanoate = 5-aminolevulinate. It participates in porphyrin-containing compound metabolism; protoporphyrin-IX biosynthesis; 5-aminolevulinate from L-glutamyl-tRNA(Glu): step 2/2. Its pathway is porphyrin-containing compound metabolism; chlorophyll biosynthesis. This Trichodesmium erythraeum (strain IMS101) protein is Glutamate-1-semialdehyde 2,1-aminomutase.